The chain runs to 72 residues: MSGLQAQDSACSLDKPSKDVVATETKPKKRICCACPDTKKLRDECIVEHGESACTKWIEAHILCLRSEGFKV.

Cu cation is bound by residues Cys32 and Cys33. Residues 32 to 72 (CCACPDTKKLRDECIVEHGESACTKWIEAHILCLRSEGFKV) form the CHCH domain. 2 short sequence motifs (cx9C motif) span residues 35-45 (CPDTKKLRDEC) and 54-64 (CTKWIEAHILC). 2 disulfide bridges follow: Cys35/Cys64 and Cys45/Cys54.

Belongs to the COX17 family.

Its subcellular location is the mitochondrion intermembrane space. Copper chaperone for cytochrome c oxidase (COX). Binds 2 copper ions and delivers them to the Cu(A) site of COX. The sequence is that of Cytochrome c oxidase copper chaperone 2 (COX17-2) from Arabidopsis thaliana (Mouse-ear cress).